We begin with the raw amino-acid sequence, 312 residues long: Ribonuclease Z (312 aa).

Residues His62, His64, Asp66, His67, His144, Asp215, and His273 each contribute to the Zn(2+) site. The active-site Proton acceptor is Asp66.

Belongs to the RNase Z family. Homodimer. Zn(2+) is required as a cofactor.

It catalyses the reaction Endonucleolytic cleavage of RNA, removing extra 3' nucleotides from tRNA precursor, generating 3' termini of tRNAs. A 3'-hydroxy group is left at the tRNA terminus and a 5'-phosphoryl group is left at the trailer molecule.. In terms of biological role, zinc phosphodiesterase, which displays some tRNA 3'-processing endonuclease activity. Probably involved in tRNA maturation, by removing a 3'-trailer from precursor tRNA. The chain is Ribonuclease Z from Prochlorococcus marinus (strain MIT 9515).